A 496-amino-acid polypeptide reads, in one-letter code: Bifunctional protein HldE (496 aa).

The segment at 1-335 (MIKHNPPSPE…GALFRSHGPT (335 aa)) is ribokinase. 211 to 214 (NRKE) contributes to the ATP binding site. The active site involves Asp280. The interval 363-496 (FTNGCFDILH…IGKLRAGSTS (134 aa)) is cytidylyltransferase.

In the N-terminal section; belongs to the carbohydrate kinase PfkB family. This sequence in the C-terminal section; belongs to the cytidylyltransferase family. As to quaternary structure, homodimer.

It carries out the reaction D-glycero-beta-D-manno-heptose 7-phosphate + ATP = D-glycero-beta-D-manno-heptose 1,7-bisphosphate + ADP + H(+). The enzyme catalyses D-glycero-beta-D-manno-heptose 1-phosphate + ATP + H(+) = ADP-D-glycero-beta-D-manno-heptose + diphosphate. Its pathway is nucleotide-sugar biosynthesis; ADP-L-glycero-beta-D-manno-heptose biosynthesis; ADP-L-glycero-beta-D-manno-heptose from D-glycero-beta-D-manno-heptose 7-phosphate: step 1/4. It participates in nucleotide-sugar biosynthesis; ADP-L-glycero-beta-D-manno-heptose biosynthesis; ADP-L-glycero-beta-D-manno-heptose from D-glycero-beta-D-manno-heptose 7-phosphate: step 3/4. Functionally, catalyzes the phosphorylation of D-glycero-D-manno-heptose 7-phosphate at the C-1 position to selectively form D-glycero-beta-D-manno-heptose-1,7-bisphosphate. Catalyzes the ADP transfer from ATP to D-glycero-beta-D-manno-heptose 1-phosphate, yielding ADP-D-glycero-beta-D-manno-heptose. In Mesorhizobium japonicum (strain LMG 29417 / CECT 9101 / MAFF 303099) (Mesorhizobium loti (strain MAFF 303099)), this protein is Bifunctional protein HldE.